We begin with the raw amino-acid sequence, 763 residues long: Formin-like protein 4 (763 aa).

The N-terminal stretch at 1 to 33 (MAAMLMQPWPPFLPHLTLVFLTLILFFPNQSFS) is a signal peptide. The segment at 52–73 (PPVQSPVLSPPQNPSSSSSDSD) is disordered. The helical transmembrane segment at 80-100 (AVLITAASTLLVAAVFFFLVH) threads the bilayer. Disordered regions lie at residues 185–327 (IYSK…DSDH) and 726–763 (RSSM…DSDM). The span at 205–225 (RSSTSHSVIHNDNYRNATTTH) shows a compositional bias: polar residues. Basic and acidic residues predominate over residues 229 to 238 (VKTDSFEFVK). A compositionally biased stretch (pro residues) spans 240 to 280 (DPTPPPPPPPPIPVKQSATPPPPPPPKLKNNGPSPPPPPPL). Low complexity predominate over residues 281–292 (KKTAALSSSASK). In terms of domain architecture, FH2 spans 303-738 (SGESSNGQVK…MGSTQQRNAV (436 aa)). Residues 316–327 (LHWDKVNPDSDH) are compositionally biased toward basic and acidic residues. Residues 726 to 736 (RSSMGSTQQRN) show a composition bias toward polar residues.

This sequence belongs to the formin-like family. Class-I subfamily. As to quaternary structure, interacts with profilin. As to expression, expressed in the whole plant (at protein level).

It localises to the cell membrane. Its function is as follows. Might be involved in the organization and polarity of the actin cytoskeleton. The chain is Formin-like protein 4 (FH4) from Arabidopsis thaliana (Mouse-ear cress).